We begin with the raw amino-acid sequence, 822 residues long: Valine--tRNA ligase (822 aa).

The 'HIGH' region motif lies at 41 to 51; it reads PNVTGQLHLGH. The 'KMSKS' region motif lies at 511-515; it reads KMSKS. ATP is bound at residue lysine 514. Residues 765-822 are a coiled coil; that stretch reads EQKGRELKEIQFLKSEILRAEKILTNKGFLEKAPREKIDLERTKLEKLKEKLVFYEKK.

It belongs to the class-I aminoacyl-tRNA synthetase family. ValS type 1 subfamily. As to quaternary structure, monomer.

It is found in the cytoplasm. The enzyme catalyses tRNA(Val) + L-valine + ATP = L-valyl-tRNA(Val) + AMP + diphosphate. Its function is as follows. Catalyzes the attachment of valine to tRNA(Val). As ValRS can inadvertently accommodate and process structurally similar amino acids such as threonine, to avoid such errors, it has a 'posttransfer' editing activity that hydrolyzes mischarged Thr-tRNA(Val) in a tRNA-dependent manner. The sequence is that of Valine--tRNA ligase from Mesomycoplasma hyopneumoniae (strain J / ATCC 25934 / NCTC 10110) (Mycoplasma hyopneumoniae).